A 430-amino-acid polypeptide reads, in one-letter code: Serine--tRNA ligase (430 aa).

Residue 237-239 (TAE) coordinates L-serine. Position 268–270 (268–270 (RSE)) interacts with ATP. Residue Glu-291 coordinates L-serine. 355–358 (EISS) is a binding site for ATP. Ser-391 is a binding site for L-serine.

This sequence belongs to the class-II aminoacyl-tRNA synthetase family. Type-1 seryl-tRNA synthetase subfamily. Homodimer. The tRNA molecule binds across the dimer.

It is found in the cytoplasm. The enzyme catalyses tRNA(Ser) + L-serine + ATP = L-seryl-tRNA(Ser) + AMP + diphosphate + H(+). It carries out the reaction tRNA(Sec) + L-serine + ATP = L-seryl-tRNA(Sec) + AMP + diphosphate + H(+). It functions in the pathway aminoacyl-tRNA biosynthesis; selenocysteinyl-tRNA(Sec) biosynthesis; L-seryl-tRNA(Sec) from L-serine and tRNA(Sec): step 1/1. Functionally, catalyzes the attachment of serine to tRNA(Ser). Is also able to aminoacylate tRNA(Sec) with serine, to form the misacylated tRNA L-seryl-tRNA(Sec), which will be further converted into selenocysteinyl-tRNA(Sec). The chain is Serine--tRNA ligase from Klebsiella pneumoniae (strain 342).